The primary structure comprises 515 residues: ATP synthase subunit alpha (515 aa).

Residue 169 to 176 (GDRQTGKT) participates in ATP binding.

Belongs to the ATPase alpha/beta chains family. F-type ATPases have 2 components, CF(1) - the catalytic core - and CF(0) - the membrane proton channel. CF(1) has five subunits: alpha(3), beta(3), gamma(1), delta(1), epsilon(1). CF(0) has three main subunits: a(1), b(2) and c(9-12). The alpha and beta chains form an alternating ring which encloses part of the gamma chain. CF(1) is attached to CF(0) by a central stalk formed by the gamma and epsilon chains, while a peripheral stalk is formed by the delta and b chains.

It is found in the cell inner membrane. It catalyses the reaction ATP + H2O + 4 H(+)(in) = ADP + phosphate + 5 H(+)(out). Produces ATP from ADP in the presence of a proton gradient across the membrane. The alpha chain is a regulatory subunit. This Neisseria meningitidis serogroup C / serotype 2a (strain ATCC 700532 / DSM 15464 / FAM18) protein is ATP synthase subunit alpha.